A 285-amino-acid chain; its full sequence is 2-hydroxy-6-oxononadienedioate/2-hydroxy-6-oxononatrienedioate hydrolase 1 (285 aa).

The active-site Proton acceptor is the His265.

Belongs to the AB hydrolase superfamily. MhpC family. As to quaternary structure, homodimer.

It carries out the reaction (2Z,4E)-2-hydroxy-6-oxonona-2,4-dienedioate + H2O = (2Z)-2-hydroxypenta-2,4-dienoate + succinate + H(+). The enzyme catalyses (2Z,4E,7E)-2-hydroxy-6-oxonona-2,4,7-trienedioate + H2O = (2Z)-2-hydroxypenta-2,4-dienoate + fumarate + H(+). It functions in the pathway aromatic compound metabolism; 3-phenylpropanoate degradation. In terms of biological role, catalyzes the cleavage of the C5-C6 bond of 2-hydroxy-6-oxononadienedioate and 2-hydroxy-6-oxononatrienedioate, a dienol ring fission product of the bacterial meta-cleavage pathway for degradation of phenylpropionic acid. This chain is 2-hydroxy-6-oxononadienedioate/2-hydroxy-6-oxononatrienedioate hydrolase 1, found in Pseudomonas putida (Arthrobacter siderocapsulatus).